A 338-amino-acid polypeptide reads, in one-letter code: Anthranilate phosphoribosyltransferase (338 aa).

5-phospho-alpha-D-ribose 1-diphosphate-binding positions include Gly-81, 84-85, Ser-89, 91-94, 109-117, and Ala-121; these read GD, NVST, and KHGNRALSS. Gly-81 lines the anthranilate pocket. Position 93 (Ser-93) interacts with Mg(2+). Asn-112 lines the anthranilate pocket. Arg-167 is an anthranilate binding site. Mg(2+) contacts are provided by Asp-226 and Glu-227.

Belongs to the anthranilate phosphoribosyltransferase family. As to quaternary structure, homodimer. Mg(2+) is required as a cofactor.

The catalysed reaction is N-(5-phospho-beta-D-ribosyl)anthranilate + diphosphate = 5-phospho-alpha-D-ribose 1-diphosphate + anthranilate. It functions in the pathway amino-acid biosynthesis; L-tryptophan biosynthesis; L-tryptophan from chorismate: step 2/5. Functionally, catalyzes the transfer of the phosphoribosyl group of 5-phosphorylribose-1-pyrophosphate (PRPP) to anthranilate to yield N-(5'-phosphoribosyl)-anthranilate (PRA). The polypeptide is Anthranilate phosphoribosyltransferase (Rhodopseudomonas palustris (strain ATCC BAA-98 / CGA009)).